Consider the following 915-residue polypeptide: DNA repair-scaffolding protein (915 aa).

Residues 1–15 (MPRGSRARGSKRKRS) show a composition bias toward basic residues. Disordered regions lie at residues 1-30 (MPRGSRARGSKRKRSWNTECPSFPGERPLQ) and 56-114 (FQNT…EDKT). A compositionally biased stretch (polar residues) spans 56 to 65 (FQNTSGNPSL). Positions 67–85 (AEEKTITEKHLELCPRPKQ) are enriched in basic and acidic residues. The span at 86-107 (ETTTSKSTSGLTDITWSSSGSD) shows a compositional bias: polar residues. The interval 151 to 450 (EISDCASCAS…GTAWTHGHKE (300 aa)) is necessary for interaction with RAD51.

In terms of assembly, found in a complex, at least composed of BLM, RAD51 and SPIDR; the complex formation is mediated by SPIDR. Interacts (via C-terminal region) with BLM; the interaction is direct. Interacts with RAD51; the interaction is direct. Interacts (via the C-terminal region) with FIGNL1 (via N-terminal one-half region); the interaction is direct.

Its subcellular location is the nucleus. Functionally, plays a role in DNA double-strand break (DBS) repair via homologous recombination (HR). Serves as a scaffolding protein that helps to promote the recruitment of DNA-processing enzymes like the helicase BLM and recombinase RAD51 to site of DNA damage, and hence contributes to maintain genomic integrity. The chain is DNA repair-scaffolding protein (SPIDR) from Homo sapiens (Human).